Consider the following 637-residue polypeptide: Threonine--tRNA ligase (637 aa).

The 61-residue stretch at 1 to 61 (MLNITLPDGS…VEDSAVQIIT (61 aa)) folds into the TGS domain. Positions 242 to 533 (DHRKLGKQLD…LIENHAGSFP (292 aa)) are catalytic. Zn(2+) is bound by residues Cys-333, His-384, and His-510.

Belongs to the class-II aminoacyl-tRNA synthetase family. Homodimer. The cofactor is Zn(2+).

It localises to the cytoplasm. The catalysed reaction is tRNA(Thr) + L-threonine + ATP = L-threonyl-tRNA(Thr) + AMP + diphosphate + H(+). Functionally, catalyzes the attachment of threonine to tRNA(Thr) in a two-step reaction: L-threonine is first activated by ATP to form Thr-AMP and then transferred to the acceptor end of tRNA(Thr). Also edits incorrectly charged L-seryl-tRNA(Thr). The chain is Threonine--tRNA ligase from Neisseria meningitidis serogroup B (strain ATCC BAA-335 / MC58).